We begin with the raw amino-acid sequence, 716 residues long: Cyclic nucleotide-gated ion channel 1 (716 aa).

The Cytoplasmic portion of the chain corresponds to M1 to K97. A helical membrane pass occupies residues I98 to I118. Topologically, residues I119–M132 are extracellular. Residues E133–F153 traverse the membrane as a helical segment. The Cytoplasmic segment spans residues Q154 to H187. A helical transmembrane segment spans residues F188–P208. The Extracellular segment spans residues H209–N220. A helical membrane pass occupies residues M221 to Y241. At K242–A259 the chain is on the cytoplasmic side. The chain crosses the membrane as a helical span at residues A260 to F280. Residues S281–I379 lie on the Extracellular side of the membrane. Residues W380 to I400 form a helical membrane-spanning segment. The Cytoplasmic portion of the chain corresponds to G401 to D716. Residues M486 to L610 and E557 contribute to the a nucleoside 3',5'-cyclic phosphate site. The tract at residues F602 to Y617 is calmodulin-binding. Residues K622–R651 form the IQ domain. The tract at residues S689–D716 is disordered.

This sequence belongs to the cyclic nucleotide-gated cation channel (TC 1.A.1.5) family. In terms of assembly, homotetramer or heterotetramer (Potential). Binds calmodulin-2/3/5 with a higher affinity than calmodulin-1/4. Expressed in the whole plant but only weakly in roots.

Its subcellular location is the cell membrane. Functionally, acts as a cyclic nucleotide-gated ion channel. Can be activated by cyclic AMP which leads to an opening of the cation channel. May be responsible for cAMP-induced calcium entry in cells and thus should be involved in the calcium signal transduction. Could transport K(+), Na(+) and Pb(2+). The chain is Cyclic nucleotide-gated ion channel 1 (CNGC1) from Arabidopsis thaliana (Mouse-ear cress).